The sequence spans 151 residues: Ribosome maturation factor RimP (151 aa).

This sequence belongs to the RimP family.

It is found in the cytoplasm. Required for maturation of 30S ribosomal subunits. In Aliivibrio fischeri (strain MJ11) (Vibrio fischeri), this protein is Ribosome maturation factor RimP.